A 117-amino-acid polypeptide reads, in one-letter code: Large ribosomal subunit protein uL18 (117 aa).

The protein belongs to the universal ribosomal protein uL18 family. In terms of assembly, part of the 50S ribosomal subunit; part of the 5S rRNA/L5/L18/L25 subcomplex. Contacts the 5S and 23S rRNAs.

In terms of biological role, this is one of the proteins that bind and probably mediate the attachment of the 5S RNA into the large ribosomal subunit, where it forms part of the central protuberance. This Aliivibrio fischeri (strain ATCC 700601 / ES114) (Vibrio fischeri) protein is Large ribosomal subunit protein uL18.